We begin with the raw amino-acid sequence, 113 residues long: Putative pterin-4-alpha-carbinolamine dehydratase (113 aa).

This sequence belongs to the pterin-4-alpha-carbinolamine dehydratase family.

The catalysed reaction is (4aS,6R)-4a-hydroxy-L-erythro-5,6,7,8-tetrahydrobiopterin = (6R)-L-erythro-6,7-dihydrobiopterin + H2O. The polypeptide is Putative pterin-4-alpha-carbinolamine dehydratase (Bordetella bronchiseptica (strain ATCC BAA-588 / NCTC 13252 / RB50) (Alcaligenes bronchisepticus)).